A 358-amino-acid chain; its full sequence is MINRKKTRELFIGDVGIGGDNPIRVQSMCNTDTRDALSTRAQIDALAEAGCEIVRVAVPDEEAAKALPQIRKGSPVPLVADIHFDYRLALSAMEAGIDALRINPGNIGGEDKVDSVVSAAKERNVPIRIGVNGGSLDKALLAKYGGPTPQAMVESALEHVALLEKRNFYNTKISLKSSSVLNTIAAYKLLAEKVDYPQHVGITEAGTLVRGAVKSSVGLGILFWEGLGDTMRVSLTHDPVAEVGVAWEILRSLGLRERGPEIVSCPTCGRTEIELIDLAQKVEDNLRGVEDVFTVAVMGCVVNGPGEAREADIGIAGGRGLGIIFRKGEVIRKVKGDENLLPEFMKEIELFLKEKRGQ.

[4Fe-4S] cluster is bound by residues cysteine 265, cysteine 268, cysteine 300, and glutamate 307.

It belongs to the IspG family. The cofactor is [4Fe-4S] cluster.

The catalysed reaction is (2E)-4-hydroxy-3-methylbut-2-enyl diphosphate + oxidized [flavodoxin] + H2O + 2 H(+) = 2-C-methyl-D-erythritol 2,4-cyclic diphosphate + reduced [flavodoxin]. The protein operates within isoprenoid biosynthesis; isopentenyl diphosphate biosynthesis via DXP pathway; isopentenyl diphosphate from 1-deoxy-D-xylulose 5-phosphate: step 5/6. Its function is as follows. Converts 2C-methyl-D-erythritol 2,4-cyclodiphosphate (ME-2,4cPP) into 1-hydroxy-2-methyl-2-(E)-butenyl 4-diphosphate. The polypeptide is 4-hydroxy-3-methylbut-2-en-1-yl diphosphate synthase (flavodoxin) (Maridesulfovibrio salexigens (strain ATCC 14822 / DSM 2638 / NCIMB 8403 / VKM B-1763) (Desulfovibrio salexigens)).